A 358-amino-acid chain; its full sequence is Peptide chain release factor 1 (358 aa).

N5-methylglutamine is present on Gln235.

This sequence belongs to the prokaryotic/mitochondrial release factor family. Methylated by PrmC. Methylation increases the termination efficiency of RF1.

The protein localises to the cytoplasm. Its function is as follows. Peptide chain release factor 1 directs the termination of translation in response to the peptide chain termination codons UAG and UAA. This is Peptide chain release factor 1 from Neisseria meningitidis serogroup B (strain ATCC BAA-335 / MC58).